A 96-amino-acid chain; its full sequence is Conglutin delta 4 (96 aa).

The signal sequence occupies residues 1–22 (MARLTILIAFVAALVLVVHTSA). Cystine bridges form between Cys29–Cys78 and Cys80–Cys91.

It belongs to the 2S seed storage albumins family.

The protein localises to the endoplasmic reticulum. The sequence is that of Conglutin delta 4 from Lupinus angustifolius (Narrow-leaved blue lupine).